Here is an 80-residue protein sequence, read N- to C-terminus: Gamma-conotoxin-like Am6.6 (80 aa).

The first 19 residues, 1 to 19, serve as a signal peptide directing secretion; it reads MEKLTILLLVAAILMSTQA. Residues 20 to 45 constitute a propeptide that is removed on maturation; sequence LNQEQRQQAKINLLSKKKPSAERWRR. 3 disulfide bridges follow: Cys47–Cys61, Cys54–Cys65, and Cys60–Cys70. 2 positions are modified to 4-carboxyglutamate: Glu56 and Glu59. 4-carboxyglutamate is present on Glu71. Pro76 is subject to 4-hydroxyproline. Positions 78–80 are excised as a propeptide; it reads RAI.

This sequence belongs to the conotoxin O2 family. Expressed by the venom duct.

The protein resides in the secreted. Functionally, gamma-conotoxins may act on voltage-gated non-specific cation pacemaker channels (HCN). This chain is Gamma-conotoxin-like Am6.6, found in Conus amadis (Amadis cone).